Reading from the N-terminus, the 335-residue chain is Glyceraldehyde-3-phosphate dehydrogenase 2 (335 aa).

NAD(+)-binding positions include 12–13 (RI), D35, R79, and S121. D-glyceraldehyde 3-phosphate is bound by residues 152 to 154 (SCT) and T183. C153 acts as the Nucleophile in catalysis. Residue N184 participates in NAD(+) binding. Residues R198, 211–212 (TG), and R234 each bind D-glyceraldehyde 3-phosphate. N316 lines the NAD(+) pocket.

It belongs to the glyceraldehyde-3-phosphate dehydrogenase family. Homotetramer.

It is found in the cytoplasm. It carries out the reaction D-glyceraldehyde 3-phosphate + phosphate + NAD(+) = (2R)-3-phospho-glyceroyl phosphate + NADH + H(+). It participates in carbohydrate degradation; glycolysis; pyruvate from D-glyceraldehyde 3-phosphate: step 1/5. With respect to regulation, inhibited by pentalenolactone. Catalyzes the oxidative phosphorylation of glyceraldehyde 3-phosphate (G3P) to 1,3-bisphosphoglycerate (BPG) using the cofactor NAD. The first reaction step involves the formation of a hemiacetal intermediate between G3P and a cysteine residue, and this hemiacetal intermediate is then oxidized to a thioester, with concomitant reduction of NAD to NADH. The reduced NADH is then exchanged with the second NAD, and the thioester is attacked by a nucleophilic inorganic phosphate to produce BPG. This chain is Glyceraldehyde-3-phosphate dehydrogenase 2 (gap2), found in Streptomyces avermitilis (strain ATCC 31267 / DSM 46492 / JCM 5070 / NBRC 14893 / NCIMB 12804 / NRRL 8165 / MA-4680).